The chain runs to 49 residues: Large ribosomal subunit protein bL33A (49 aa).

The tract at residues K20–K49 is disordered. The span at N25–K49 shows a compositional bias: basic and acidic residues.

The protein belongs to the bacterial ribosomal protein bL33 family. As to quaternary structure, part of the 50S ribosomal subunit. Interacts with VmlR.

The sequence is that of Large ribosomal subunit protein bL33A (rpmGA) from Bacillus subtilis (strain 168).